A 104-amino-acid chain; its full sequence is Growth-regulated protein homolog alpha (104 aa).

A signal peptide spans 1–30 (MAPAATAAAPRLLRAAMLFLLLVAAGRRAA). Disulfide bonds link C40/C66 and C42/C82.

This sequence belongs to the intercrine alpha (chemokine CxC) family.

It localises to the secreted. In Bos taurus (Bovine), this protein is Growth-regulated protein homolog alpha.